A 306-amino-acid polypeptide reads, in one-letter code: Putative transcriptional regulator (306 aa).

One can recognise an HTH lysR-type domain in the interval 1-61; it reads MIKRNLNDLL…TRTTRSVSPT (61 aa). The segment at residues 21-40 is a DNA-binding region (H-T-H motif); that stretch reads FTRAAAQLGVTQSALSQSIS.

Belongs to the LysR transcriptional regulatory family.

May have a role in the regulation of oprD expression. The polypeptide is Putative transcriptional regulator (Pseudomonas aeruginosa (strain ATCC 15692 / DSM 22644 / CIP 104116 / JCM 14847 / LMG 12228 / 1C / PRS 101 / PAO1)).